Here is a 330-residue protein sequence, read N- to C-terminus: Elongation factor Ts, mitochondrial (330 aa).

The N-terminal 16 residues, 1 to 16 (MYRNCRKAFTFSLRHY), are a transit peptide targeting the mitochondrion.

It belongs to the EF-Ts family.

It localises to the mitochondrion. In terms of biological role, associates with the EF-Tu.GDP complex and induces the exchange of GDP to GTP. It remains bound to the aminoacyl-tRNA.EF-Tu.GTP complex up to the GTP hydrolysis stage on the ribosome. This chain is Elongation factor Ts, mitochondrial, found in Laccaria bicolor (strain S238N-H82 / ATCC MYA-4686) (Bicoloured deceiver).